The sequence spans 750 residues: MSIISSWLLVSIICLTTSIVTKLQAAGVTTHLFYLTRGAPLSLKENYYPWLKAGSFFPDALYSCAPSNKDWSDFAEFTHWPNFLMIAVSYWQQKYGQNDRLRGTHGSLALKSFLIGVFTHQIVDVSWHSLVTDYRMHGLLRVLSETEFDGDIETAHTFLDVMGEFLTLNNVIRDSNNNENWDFLTRSDWKLPREEDLMEIIRNAGLSKEKLSYAELEFCVKRGMAAAISEGYLFRSQRNQLLTNIYSTSPRANDLILNHWLGGQSNLVAMLQRCVPFFETLFHDENTNEAQAEELRLCANLPPVSQKRINARPLVSSLKARKGNSHIVVSPMKSFSDFGTSLTMGKFREDNKDYLAVSAPLEDTVGAIYIVPWDILTVARKEDFSILQPITAMYGSKVGTYKASDVDYLLVSQPGTCTIDFYFKGVKILTIKDETTEEAHQLQFAVTGNFYDDKIPDLVVSSPSYGANETGIATFIPGSSIISYLTNSDKYQVVDISTFKGVINLDGYPMKIPFQHFGATIQISDTTDKQKLIYITCQSLGTVFVYSSNDLHDLSIPIYYITKNGVIPAKDSDHVEWHIIPSKEHGMFGAAIYSWNFEGMSFVAVSQPMFDTVFIYIEKSGQIEFFLKLVLKIKTKSDSIPDEFGSSLLFNDEEKKLYVSSPGSFDARGSIWKISMDELLKAGNDPKRKTLLINNLRHLMLINPDKSSKGVSNFGNSMILGPQNHLIVGIPQYGYGNFDHMQLTGRILVL.

3 consecutive transmembrane segments (helical) span residues 1 to 21, 465 to 485, and 586 to 606; these read MSII…SIVT, YGAN…ISYL, and GMFG…VAVS.

The protein resides in the membrane. This is an uncharacterized protein from Saccharomyces cerevisiae (strain ATCC 204508 / S288c) (Baker's yeast).